The sequence spans 830 residues: Periplasmic nitrate reductase (830 aa).

Positions 1-31 (MKLSRRDFMKANAAVAAAAAAGMTIPTVAKA) form a signal peptide, tat-type signal. Residues 39–95 (IKWDKAPCRFCGTGCGVLVGTQNGRIVASQGDPDSPVNRGLNCIKGYFLPKIMYGKD) form the 4Fe-4S Mo/W bis-MGD-type domain. Residues cysteine 46, cysteine 49, cysteine 53, and cysteine 81 each coordinate [4Fe-4S] cluster. Mo-bis(molybdopterin guanine dinucleotide)-binding positions include lysine 83, glutamine 150, asparagine 175, cysteine 179, 212–219 (WGSNMAEM), 243–247 (STYEH), 262–264 (QTD), methionine 372, glutamine 376, asparagine 482, 508–509 (SD), lysine 531, aspartate 558, and 718–727 (TGRVLEHWHT). Phenylalanine 794 is a binding site for substrate. Asparagine 802 and lysine 819 together coordinate Mo-bis(molybdopterin guanine dinucleotide).

This sequence belongs to the prokaryotic molybdopterin-containing oxidoreductase family. NasA/NapA/NarB subfamily. In terms of assembly, component of the periplasmic nitrate reductase NapAB complex composed of NapA and NapB. Requires [4Fe-4S] cluster as cofactor. Mo-bis(molybdopterin guanine dinucleotide) serves as cofactor. Predicted to be exported by the Tat system. The position of the signal peptide cleavage has not been experimentally proven.

Its subcellular location is the periplasm. The enzyme catalyses 2 Fe(II)-[cytochrome] + nitrate + 2 H(+) = 2 Fe(III)-[cytochrome] + nitrite + H2O. In terms of biological role, catalytic subunit of the periplasmic nitrate reductase complex NapAB. Receives electrons from NapB and catalyzes the reduction of nitrate to nitrite. This is Periplasmic nitrate reductase from Yersinia pseudotuberculosis serotype IB (strain PB1/+).